The primary structure comprises 363 residues: dTDP-3-amino-3,6-dideoxy-alpha-D-galactopyranose transaminase (363 aa).

At Lys-185 the chain carries N6-(pyridoxal phosphate)lysine.

The protein belongs to the DegT/DnrJ/EryC1 family. The cofactor is pyridoxal 5'-phosphate.

It catalyses the reaction dTDP-3-amino-3,6-dideoxy-alpha-D-galactopyranose + 2-oxoglutarate = dTDP-3-dehydro-6-deoxy-alpha-D-galactose + L-glutamate. Specifically aminates dTDP-6-deoxy-D-xylohex-3-ulose to form dTDP-D-Fucp3N in the biosynthesis of dTDP-3-acetamido-3,6-dideoxy-alpha-D-galactose, a glycan chain of the S-layer. This Aneurinibacillus thermoaerophilus protein is dTDP-3-amino-3,6-dideoxy-alpha-D-galactopyranose transaminase (fdtB).